The following is an 88-amino-acid chain: Large ribosomal subunit protein bL27 (88 aa).

The protein belongs to the bacterial ribosomal protein bL27 family.

This is Large ribosomal subunit protein bL27 from Parabacteroides distasonis (strain ATCC 8503 / DSM 20701 / CIP 104284 / JCM 5825 / NCTC 11152).